Consider the following 333-residue polypeptide: MFYDDDADLSIIEGRKVGVIGYGSQGHAHSLSLRDSGVQVRVGLKEGSKSRAKVEEQGIEVDTPAKVAEWADVIMVLAPDTAQAEIFANDIEPNLKPGDALFFGHGLNVHFGLIKPPADVTVAMVAPKGPGHLVRRQFVDGKGVPCLIAVDQDPTGKGEALALSYAKAIGGTRAGVIKTTFKDETETDLFGEQAVLCGGTEELVKTGFDVMVEAGYPPEMAYFEVLHELKLIVDLMYEGGIARMNYSVSDTAEFGGYLSGPRVIDAGTKERMRAILRDIQSGDFVKKLVANVEGGNKQLEALRKENAEHSIEVTGKKLRDLMSWVDRPITETA.

The KARI N-terminal Rossmann domain occupies 1-179 (MFYDDDADLS…GGTRAGVIKT (179 aa)). NADP(+) contacts are provided by residues 22–25 (YGSQ), Lys-45, Ser-48, Ser-50, and 80–83 (DTAQ). The active site involves His-105. Residue Gly-131 coordinates NADP(+). Residues 180–325 (TFKDETETDL…KKLRDLMSWV (146 aa)) form the KARI C-terminal knotted domain. Residues Asp-188, Glu-192, Glu-224, and Glu-228 each coordinate Mg(2+). Ser-249 is a binding site for substrate.

It belongs to the ketol-acid reductoisomerase family. It depends on Mg(2+) as a cofactor.

The enzyme catalyses (2R)-2,3-dihydroxy-3-methylbutanoate + NADP(+) = (2S)-2-acetolactate + NADPH + H(+). The catalysed reaction is (2R,3R)-2,3-dihydroxy-3-methylpentanoate + NADP(+) = (S)-2-ethyl-2-hydroxy-3-oxobutanoate + NADPH + H(+). Its pathway is amino-acid biosynthesis; L-isoleucine biosynthesis; L-isoleucine from 2-oxobutanoate: step 2/4. It functions in the pathway amino-acid biosynthesis; L-valine biosynthesis; L-valine from pyruvate: step 2/4. In terms of biological role, involved in the biosynthesis of branched-chain amino acids (BCAA). Catalyzes an alkyl-migration followed by a ketol-acid reduction of (S)-2-acetolactate (S2AL) to yield (R)-2,3-dihydroxy-isovalerate. In the isomerase reaction, S2AL is rearranged via a Mg-dependent methyl migration to produce 3-hydroxy-3-methyl-2-ketobutyrate (HMKB). In the reductase reaction, this 2-ketoacid undergoes a metal-dependent reduction by NADPH to yield (R)-2,3-dihydroxy-isovalerate. The polypeptide is Ketol-acid reductoisomerase (NADP(+)) (Mycobacterium ulcerans (strain Agy99)).